We begin with the raw amino-acid sequence, 932 residues long: Isoleucine--tRNA ligase (932 aa).

The 'HIGH' region motif lies at 59–69 (PYANGTIHIGH). Glu562 contributes to the L-isoleucyl-5'-AMP binding site. The short motif at 603–607 (KMSKS) is the 'KMSKS' region element. Lys606 provides a ligand contact to ATP. Residues Cys899, Cys902, Cys915, and Cys918 each contribute to the Zn(2+) site.

This sequence belongs to the class-I aminoacyl-tRNA synthetase family. IleS type 1 subfamily. Monomer. It depends on Zn(2+) as a cofactor.

The protein resides in the cytoplasm. The catalysed reaction is tRNA(Ile) + L-isoleucine + ATP = L-isoleucyl-tRNA(Ile) + AMP + diphosphate. In terms of biological role, catalyzes the attachment of isoleucine to tRNA(Ile). As IleRS can inadvertently accommodate and process structurally similar amino acids such as valine, to avoid such errors it has two additional distinct tRNA(Ile)-dependent editing activities. One activity is designated as 'pretransfer' editing and involves the hydrolysis of activated Val-AMP. The other activity is designated 'posttransfer' editing and involves deacylation of mischarged Val-tRNA(Ile). The polypeptide is Isoleucine--tRNA ligase (Pasteurella multocida (strain Pm70)).